The chain runs to 159 residues: Cytochrome c-type biogenesis protein CcmE (159 aa).

Topologically, residues 1-8 (MNLRRKNR) are cytoplasmic. The helical; Signal-anchor for type II membrane protein transmembrane segment at 9 to 29 (LWVVCAVLAGLGLTTALVLYA) threads the bilayer. Topologically, residues 30-159 (LRANIDLFYT…PQRADKDTSS (130 aa)) are periplasmic. The tract at residues 129 to 159 (KHDENYTPPEVEKAMQENHRRPQRADKDTSS) is disordered. 2 residues coordinate heme: His130 and Tyr134.

This sequence belongs to the CcmE/CycJ family.

The protein localises to the cell inner membrane. Its function is as follows. Heme chaperone required for the biogenesis of c-type cytochromes. Transiently binds heme delivered by CcmC and transfers the heme to apo-cytochromes in a process facilitated by CcmF and CcmH. This is Cytochrome c-type biogenesis protein CcmE from Salmonella typhimurium (strain LT2 / SGSC1412 / ATCC 700720).